Reading from the N-terminus, the 217-residue chain is UPF0502 protein KPN78578_10500 (217 aa).

Belongs to the UPF0502 family.

The polypeptide is UPF0502 protein KPN78578_10500 (Klebsiella pneumoniae subsp. pneumoniae (strain ATCC 700721 / MGH 78578)).